A 609-amino-acid polypeptide reads, in one-letter code: Autophagy-related protein 22-1 (609 aa).

4 helical membrane-spanning segments follow: residues 95-115 (YYAG…GVEI), 117-137 (TASF…ILII), 151-171 (LLLV…LGVV), and 176-196 (MVGA…FVLL). Residues 214 to 238 (AREPPPALDGSRAQEGHSDTTNDID) are disordered. Residues 225–238 (RAQEGHSDTTNDID) are compositionally biased toward basic and acidic residues. N-linked (GlcNAc...) asparagine glycosylation occurs at Asn244. A helical transmembrane segment spans residues 287–307 (IGIGYIGAIILQIVCILVVIA). Asn309 is a glycosylation site (N-linked (GlcNAc...) asparagine). 3 helical membrane-spanning segments follow: residues 317 to 337 (LVLF…ALWL), 381 to 401 (ILLF…VSGT), and 415 to 435 (AALG…AFSW). N-linked (GlcNAc...) asparagine glycosylation is present at Asn443. Helical transmembrane passes span 450-470 (IIAC…GFIP), 487-509 (FPLG…SFFG), 522-542 (ALYA…VGII), and 552-572 (AFVF…LVDV).

Belongs to the ATG22 family.

It is found in the vacuole membrane. Vacuolar effluxer which mediate the efflux of amino acids resulting from autophagic degradation. The release of autophagic amino acids allows the maintenance of protein synthesis and viability during nitrogen starvation. The polypeptide is Autophagy-related protein 22-1 (atg22-1) (Neosartorya fischeri (strain ATCC 1020 / DSM 3700 / CBS 544.65 / FGSC A1164 / JCM 1740 / NRRL 181 / WB 181) (Aspergillus fischerianus)).